Consider the following 96-residue polypeptide: Cobalt transport protein CbiN (96 aa).

Helical transmembrane passes span 4–24 (WLAAGGILLGALVVFSFVSAG) and 59–79 (IESLLFSIQAAVGGIIIGYYL).

It belongs to the CbiN family. Forms an energy-coupling factor (ECF) transporter complex composed of an ATP-binding protein (A component, CbiO), a transmembrane protein (T component, CbiQ) and 2 possible substrate-capture proteins (S components, CbiM and CbiN) of unknown stoichimetry.

The protein localises to the cell membrane. It participates in cofactor biosynthesis; adenosylcobalamin biosynthesis. Part of the energy-coupling factor (ECF) transporter complex CbiMNOQ involved in cobalt import. This chain is Cobalt transport protein CbiN, found in Halobacterium salinarum (strain ATCC 29341 / DSM 671 / R1).